We begin with the raw amino-acid sequence, 612 residues long: Glutamine--fructose-6-phosphate aminotransferase [isomerizing] (612 aa).

The active-site Nucleophile; for GATase activity is Cys-2. The 216-residue stretch at 2–217 folds into the Glutamine amidotransferase type-2 domain; the sequence is CGIVGGVAER…EGDIARLTRD (216 aa). SIS domains are found at residues 283–428 and 461–602; these read AEAD…VKEQ and LSEL…VDQP. Lys-607 acts as the For Fru-6P isomerization activity in catalysis.

Homodimer.

Its subcellular location is the cytoplasm. The enzyme catalyses D-fructose 6-phosphate + L-glutamine = D-glucosamine 6-phosphate + L-glutamate. Its function is as follows. Catalyzes the first step in hexosamine metabolism, converting fructose-6P into glucosamine-6P using glutamine as a nitrogen source. This chain is Glutamine--fructose-6-phosphate aminotransferase [isomerizing], found in Acinetobacter baylyi (strain ATCC 33305 / BD413 / ADP1).